The sequence spans 72 residues: Large ribosomal subunit protein uL29 (72 aa).

Belongs to the universal ribosomal protein uL29 family.

The chain is Large ribosomal subunit protein uL29 (rpmC) from Chlamydia pneumoniae (Chlamydophila pneumoniae).